Reading from the N-terminus, the 186-residue chain is MVFRAVSGKKFVAVKIFKMSTLKFMSIRKYIEGDQRFSKIRIDRNDIVPVWVRKEYTNLMALENAHVPAPKPIGFFKNILVMSYIGTKSGPAPQLKDVEIDEGIYDQVIDGMRRMYANRIVHADLSEYNMLFHRKVYFIDLAQAVDMDHPMAAEFLERDIVNVSNFFQKHGIETDPDKIREYIKKK.

Residue Lys15 coordinates ATP. Asp124 functions as the Proton acceptor in the catalytic mechanism. Asn129 and Asp140 together coordinate Mg(2+). Asp140 functions as the 4-aspartylphosphate intermediate in the catalytic mechanism.

The protein belongs to the protein kinase superfamily. RIO-type Ser/Thr kinase family.

The catalysed reaction is L-seryl-[protein] + ATP = O-phospho-L-seryl-[protein] + ADP + H(+). It catalyses the reaction L-threonyl-[protein] + ATP = O-phospho-L-threonyl-[protein] + ADP + H(+). It carries out the reaction ATP + H2O = ADP + phosphate + H(+). Functionally, despite the protein kinase domain is proposed to act predominantly as an ATPase. This chain is RIO-type serine/threonine-protein kinase Rio1 (rio1), found in Thermoplasma acidophilum (strain ATCC 25905 / DSM 1728 / JCM 9062 / NBRC 15155 / AMRC-C165).